Reading from the N-terminus, the 426-residue chain is Histidine--tRNA ligase (426 aa).

It belongs to the class-II aminoacyl-tRNA synthetase family.

It localises to the cytoplasm. It catalyses the reaction tRNA(His) + L-histidine + ATP = L-histidyl-tRNA(His) + AMP + diphosphate + H(+). The sequence is that of Histidine--tRNA ligase from Saccharolobus islandicus (strain Y.G.57.14 / Yellowstone #1) (Sulfolobus islandicus).